The primary structure comprises 501 residues: Aldehyde dehydrogenase 1A1 (501 aa).

S2 is modified (N-acetylserine). N6-acetyllysine occurs at positions 91 and 128. NAD(+)-binding positions include 167–170, 193–196, 226–227, and 246–247; these read IPWN, KPAE, GP, and GS. K252 is subject to N6-acetyllysine. E269 acts as the Proton acceptor in catalysis. Position 269-271 (269-271) interacts with NAD(+); that stretch reads ELG. C303 functions as the Nucleophile in the catalytic mechanism. Positions 336 to 501 are mediates interaction with PRMT3; the sequence is LTQGINQGPQ…VAMKISQKNS (166 aa). Phosphothreonine is present on T337. Position 349–353 (349–353) interacts with NAD(+); the sequence is EQHDK. N6-acetyllysine is present on residues K353 and K367. An NAD(+)-binding site is contributed by 400–402; it reads EIF. K410 bears the N6-acetyllysine mark. S413 carries the phosphoserine modification. N6-acetyllysine occurs at positions 419, 435, and 495.

It belongs to the aldehyde dehydrogenase family. As to quaternary structure, homotetramer. Interacts with PRMT3; the interaction is direct, inhibits ALDH1A1 aldehyde dehydrogenase activity and is independent of the methyltransferase activity of PRMT3. The N-terminus is blocked most probably by acetylation. Strongly expressed in kidney, lung, testis, intestine, stomach, and trachea, but weakly in the liver.

The protein resides in the cytoplasm. Its subcellular location is the cytosol. It localises to the cell projection. The protein localises to the axon. It catalyses the reaction an aldehyde + NAD(+) + H2O = a carboxylate + NADH + 2 H(+). The catalysed reaction is all-trans-retinal + NAD(+) + H2O = all-trans-retinoate + NADH + 2 H(+). The enzyme catalyses 9-cis-retinal + NAD(+) + H2O = 9-cis-retinoate + NADH + 2 H(+). It carries out the reaction 11-cis-retinal + NAD(+) + H2O = 11-cis-retinoate + NADH + 2 H(+). It catalyses the reaction 13-cis-retinal + NAD(+) + H2O = 13-cis-retinoate + NADH + 2 H(+). The catalysed reaction is 3-deoxyglucosone + NAD(+) + H2O = 2-dehydro-3-deoxy-D-gluconate + NADH + 2 H(+). The enzyme catalyses (E)-4-hydroxynon-2-enal + NAD(+) + H2O = (E)-4-hydroxynon-2-enoate + NADH + 2 H(+). It carries out the reaction malonaldehyde + NAD(+) + H2O = 3-oxopropanoate + NADH + 2 H(+). It catalyses the reaction hexanal + NAD(+) + H2O = hexanoate + NADH + 2 H(+). The catalysed reaction is propanal + NAD(+) + H2O = propanoate + NADH + 2 H(+). The enzyme catalyses acetaldehyde + NAD(+) + H2O = acetate + NADH + 2 H(+). It carries out the reaction benzaldehyde + NAD(+) + H2O = benzoate + NADH + 2 H(+). It catalyses the reaction 4-aminobutanal + NAD(+) + H2O = 4-aminobutanoate + NADH + 2 H(+). The protein operates within cofactor metabolism; retinol metabolism. Its activity is regulated as follows. Inhibited by chloral hydrate. Functionally, cytosolic dehydrogenase that catalyzes the irreversible oxidation of a wide range of aldehydes to their corresponding carboxylic acid. Functions downstream of retinol dehydrogenases and catalyzes the oxidation of retinaldehyde into retinoic acid, the second step in the oxidation of retinol/vitamin A into retinoic acid. This pathway is crucial to control the levels of retinol and retinoic acid, two important molecules which excess can be teratogenic and cytotoxic. Also oxidizes aldehydes resulting from lipid peroxidation like (E)-4-hydroxynon-2-enal/HNE, malonaldehyde and hexanal that form protein adducts and are highly cytotoxic. By participating for instance to the clearance of (E)-4-hydroxynon-2-enal/HNE in the lens epithelium prevents the formation of HNE-protein adducts and lens opacification. Functions also downstream of fructosamine-3-kinase in the fructosamine degradation pathway by catalyzing the oxidation of 3-deoxyglucosone, the carbohydrate product of fructosamine 3-phosphate decomposition, which is itself a potent glycating agent that may react with lysine and arginine side-chains of proteins. Also has an aminobutyraldehyde dehydrogenase activity and is probably part of an alternative pathway for the biosynthesis of GABA/4-aminobutanoate in midbrain, thereby playing a role in GABAergic synaptic transmission. The polypeptide is Aldehyde dehydrogenase 1A1 (Rattus norvegicus (Rat)).